The chain runs to 485 residues: UDP-N-acetylmuramoyl-L-alanyl-D-glutamate--2,6-diaminopimelate ligase (485 aa).

UDP-N-acetyl-alpha-D-muramoyl-L-alanyl-D-glutamate is bound at residue S30. 113 to 119 contributes to the ATP binding site; the sequence is GTNGKTT. UDP-N-acetyl-alpha-D-muramoyl-L-alanyl-D-glutamate is bound by residues 155–156, S182, and R190; that span reads TT. At K222 the chain carries N6-carboxylysine. Meso-2,6-diaminopimelate-binding positions include R381, 405-408, G455, and E459; that span reads DNPR. The Meso-diaminopimelate recognition motif motif lies at 405 to 408; that stretch reads DNPR.

Belongs to the MurCDEF family. MurE subfamily. It depends on Mg(2+) as a cofactor. In terms of processing, carboxylation is probably crucial for Mg(2+) binding and, consequently, for the gamma-phosphate positioning of ATP.

The protein resides in the cytoplasm. The catalysed reaction is UDP-N-acetyl-alpha-D-muramoyl-L-alanyl-D-glutamate + meso-2,6-diaminopimelate + ATP = UDP-N-acetyl-alpha-D-muramoyl-L-alanyl-gamma-D-glutamyl-meso-2,6-diaminopimelate + ADP + phosphate + H(+). It functions in the pathway cell wall biogenesis; peptidoglycan biosynthesis. Functionally, catalyzes the addition of meso-diaminopimelic acid to the nucleotide precursor UDP-N-acetylmuramoyl-L-alanyl-D-glutamate (UMAG) in the biosynthesis of bacterial cell-wall peptidoglycan. This chain is UDP-N-acetylmuramoyl-L-alanyl-D-glutamate--2,6-diaminopimelate ligase, found in Clostridium tetani (strain Massachusetts / E88).